An 88-amino-acid chain; its full sequence is UPF0250 protein Sama_2593 (88 aa).

It belongs to the UPF0250 family.

In Shewanella amazonensis (strain ATCC BAA-1098 / SB2B), this protein is UPF0250 protein Sama_2593.